A 42-amino-acid polypeptide reads, in one-letter code: Purine nucleoside phosphorylase DeoD-type (42 aa).

8 to 9 (SD) contributes to the a purine D-ribonucleoside binding site. The Proton donor role is filled by Asp-9.

It belongs to the PNP/UDP phosphorylase family. Homohexamer; trimer of homodimers.

The catalysed reaction is a purine D-ribonucleoside + phosphate = a purine nucleobase + alpha-D-ribose 1-phosphate. It carries out the reaction a purine 2'-deoxy-D-ribonucleoside + phosphate = a purine nucleobase + 2-deoxy-alpha-D-ribose 1-phosphate. In terms of biological role, catalyzes the reversible phosphorolytic breakdown of the N-glycosidic bond in the beta-(deoxy)ribonucleoside molecules, with the formation of the corresponding free purine bases and pentose-1-phosphate. This is Purine nucleoside phosphorylase DeoD-type from Mycoplasmoides pirum (Mycoplasma pirum).